We begin with the raw amino-acid sequence, 211 residues long: Ribosomal RNA small subunit methyltransferase G (211 aa).

Gly73, Phe78, and Arg141 together coordinate S-adenosyl-L-methionine.

It belongs to the methyltransferase superfamily. RNA methyltransferase RsmG family.

It is found in the cytoplasm. The enzyme catalyses guanosine(527) in 16S rRNA + S-adenosyl-L-methionine = N(7)-methylguanosine(527) in 16S rRNA + S-adenosyl-L-homocysteine. Specifically methylates the N7 position of guanine in position 527 of 16S rRNA. The protein is Ribosomal RNA small subunit methyltransferase G of Jannaschia sp. (strain CCS1).